We begin with the raw amino-acid sequence, 778 residues long: DNA repair protein crb2 (778 aa).

Positions lysine 35–serine 56 are disordered. At threonine 73 the chain carries Phosphothreonine; by ATM. Position 80 is a phosphoserine; by ATM (serine 80). The tract at residues valine 141–glutamate 245 is interaction with rad4. Threonine 187 bears the Phosphothreonine mark. Threonine 215 carries the phosphothreonine; by cdc2 modification. Phosphothreonine is present on threonine 235. The interval serine 358–phenylalanine 493 is tudor-like. The segment at phenylalanine 370–threonine 404 is interaction with dimethylated histone H4. Residues serine 535–leucine 653 enclose the BRCT domain.

Homodimer. Dimerization is mediated via the BRCT domain. Interacts (via BRCT domain) with rad3. Interacts with rad4 (via BRCT1,2 domains); a single rad4 molecule interacts simultaneously with both Thr-187 phosphorylation sites in a crb2 dimer. Interacts (via Tudor domain) with histone H4K20me2. Interacts (via BRCT dmain) with histone H2AS128ph (gamma-H2A). Interacts with chk1. Interacts with sad1. Phosphorylation of Thr-73 and Ser-80 by rad3/ATM promotes interaction with chk1. Phosphorylation at Thr-187 is dependent on phosphorylation at Thr-215 and Thr-235. Phosphorylation at Thr-215 and Thr-235 may prime the non-canonical Thr-187 site for cdc2/CDK phosphorylation.

The protein resides in the nucleus. Its function is as follows. Essential for cell cycle arrest at the G1 and G2 stages following DNA damage by X-, and UV-irradiation, or inactivation of DNA ligase. Plays a role in the response to DNA damage. Interaction with rad4 via its phosphorylation sites in the N-terminus couples the DNA checkpoint apparatus to chromatin via interaction of its C-terminal BRCT domains with epigenetic modifications on histones H4 and H2A, respectively, in the G1/S phase of the cell cycle, and facilitates recruitment of the checkpoint kinase chk1. The protein is DNA repair protein crb2 of Schizosaccharomyces pombe (strain 972 / ATCC 24843) (Fission yeast).